A 38-amino-acid polypeptide reads, in one-letter code: Photosystem II reaction center protein L (38 aa).

The helical transmembrane segment at 17–37 (SLYWGLLLIFVLAVLFSNYFF) threads the bilayer.

The protein belongs to the PsbL family. PSII is composed of 1 copy each of membrane proteins PsbA, PsbB, PsbC, PsbD, PsbE, PsbF, PsbH, PsbI, PsbJ, PsbK, PsbL, PsbM, PsbT, PsbX, PsbY, PsbZ, Psb30/Ycf12, at least 3 peripheral proteins of the oxygen-evolving complex and a large number of cofactors. It forms dimeric complexes.

The protein localises to the plastid. The protein resides in the chloroplast thylakoid membrane. Its function is as follows. One of the components of the core complex of photosystem II (PSII). PSII is a light-driven water:plastoquinone oxidoreductase that uses light energy to abstract electrons from H(2)O, generating O(2) and a proton gradient subsequently used for ATP formation. It consists of a core antenna complex that captures photons, and an electron transfer chain that converts photonic excitation into a charge separation. This subunit is found at the monomer-monomer interface and is required for correct PSII assembly and/or dimerization. This Antirrhinum majus (Garden snapdragon) protein is Photosystem II reaction center protein L.